We begin with the raw amino-acid sequence, 53 residues long: Rubredoxin (53 aa).

Residues 1–53 (MTKYVCTVCGYVYDPEVGDPDNNINPGTSFQDIPEDWVCPLCGVGKDQFEEEA) form the Rubredoxin-like domain. The Fe cation site is built by C6, C9, C39, and C42.

The protein belongs to the rubredoxin family. The cofactor is Fe(3+).

Functionally, rubredoxin is a small nonheme, iron protein lacking acid-labile sulfide. Its single Fe, chelated to 4 Cys, functions as an electron acceptor and may also stabilize the conformation of the molecule. This chain is Rubredoxin, found in Acetoanaerobium sticklandii (strain ATCC 12662 / DSM 519 / JCM 1433 / CCUG 9281 / NCIMB 10654 / HF) (Clostridium sticklandii).